We begin with the raw amino-acid sequence, 82 residues long: MARQQEPRKPFKSRPNPLDAAEITYIDYKDTDLLRRFVSDRGKIRGRRVTRISARQQRQVAAAIKNAREMALLPYTGSPAGT.

It belongs to the bacterial ribosomal protein bS18 family. Part of the 30S ribosomal subunit. Forms a tight heterodimer with protein bS6.

Binds as a heterodimer with protein bS6 to the central domain of the 16S rRNA, where it helps stabilize the platform of the 30S subunit. This is Small ribosomal subunit protein bS18A from Streptomyces griseus subsp. griseus (strain JCM 4626 / CBS 651.72 / NBRC 13350 / KCC S-0626 / ISP 5235).